The chain runs to 210 residues: Thymidylate kinase (210 aa).

Aspartate 17 provides a ligand contact to dGMP. Aspartate 17 serves as a coordination point for dTMP. The ATP site is built by arginine 18, serine 19, glycine 20, lysine 21, serine 22, and threonine 23. Arginine 47, phenylalanine 74, arginine 78, arginine 99, and tyrosine 107 together coordinate dTMP. DGMP-binding residues include phenylalanine 74, arginine 78, arginine 99, tyrosine 107, serine 108, and tyrosine 153. An LID region spans residues 143–155 (QNRSDYGEEIYEK). Residue arginine 182 coordinates ATP.

This sequence belongs to the thymidylate kinase family. In terms of assembly, homodimer. Binds two dTMP molecules per dimer. Binds only one dTGP molecule per dimer.

The catalysed reaction is dTMP + ATP = dTDP + ADP. The enzyme catalyses dGMP + ATP = dGDP + ADP. It participates in pyrimidine metabolism; dTTP biosynthesis. Its activity is regulated as follows. Inhibited by deoxyguanosine (dG), deoxythymidine (dT) and azidothymidine (AZT). Functionally, catalyzes the phosphorylation of thymidine monophosphate (dTMP) to thymidine diphosphate (dTDP), the immediate precursor for the DNA building block dTTP. Can also phosphorylate dGMP and to a lesser extent GMP, dUMP and dIMP. Can use either ATP or dATP as phosphate donors in presence of Mg(2+). The sequence is that of Thymidylate kinase from Plasmodium falciparum (isolate 3D7).